The sequence spans 326 residues: 3-oxopimeloyl-[acyl-carrier-protein] synthase (326 aa).

Residues cysteine 115 and histidine 253 contribute to the active site. Residues 254-258 (QANIR) form an ACP-binding region. Residue asparagine 283 is part of the active site.

Belongs to the thiolase-like superfamily. BioZ family.

The enzyme catalyses malonyl-[ACP] + an acyl-CoA + H(+) = a 3-oxoacyl-[ACP] + CO2 + CoA. It carries out the reaction glutaryl-CoA + malonyl-[ACP] + H(+) = 3-oxo-6-carboxyhexanoyl-[ACP] + CO2 + CoA. Its pathway is cofactor biosynthesis; biotin biosynthesis. Its function is as follows. Involved in the formation of the biotin precursor pimeloyl-ACP. Catalyzes the condensation of glutaryl-CoA, an intermediate in lysine degradation, with malonyl-ACP to produce 3-oxopimeloyl-ACP. The polypeptide is 3-oxopimeloyl-[acyl-carrier-protein] synthase (Brucella abortus (strain 2308)).